We begin with the raw amino-acid sequence, 432 residues long: Lipid-A-disaccharide synthase (432 aa).

Over residues M1–I11 the composition is skewed to polar residues. Residues M1 to L35 are disordered.

It belongs to the LpxB family.

It catalyses the reaction a lipid X + a UDP-2-N,3-O-bis[(3R)-3-hydroxyacyl]-alpha-D-glucosamine = a lipid A disaccharide + UDP + H(+). It participates in bacterial outer membrane biogenesis; LPS lipid A biosynthesis. Condensation of UDP-2,3-diacylglucosamine and 2,3-diacylglucosamine-1-phosphate to form lipid A disaccharide, a precursor of lipid A, a phosphorylated glycolipid that anchors the lipopolysaccharide to the outer membrane of the cell. In Xanthomonas oryzae pv. oryzae (strain MAFF 311018), this protein is Lipid-A-disaccharide synthase.